Consider the following 788-residue polypeptide: 5-methyltetrahydropteroyltriglutamate--homocysteine methyltransferase (788 aa).

5-methyltetrahydropteroyltri-L-glutamate contacts are provided by residues 24–27 (RELK) and K140. Residues 463-465 (IGS) and E516 contribute to the L-homocysteine site. Residues 463–465 (IGS) and E516 contribute to the L-methionine site. Residues 547-548 (RC) and W593 contribute to the 5-methyltetrahydropteroyltri-L-glutamate site. D631 is an L-homocysteine binding site. D631 is an L-methionine binding site. Residue E637 coordinates 5-methyltetrahydropteroyltri-L-glutamate. Zn(2+)-binding residues include H673, C675, and E697. H726 acts as the Proton donor in catalysis. Zn(2+) is bound at residue C758.

Belongs to the vitamin-B12 independent methionine synthase family. It depends on Zn(2+) as a cofactor.

It carries out the reaction 5-methyltetrahydropteroyltri-L-glutamate + L-homocysteine = tetrahydropteroyltri-L-glutamate + L-methionine. The protein operates within amino-acid biosynthesis; L-methionine biosynthesis via de novo pathway; L-methionine from L-homocysteine (MetE route): step 1/1. Functionally, catalyzes the transfer of a methyl group from 5-methyltetrahydrofolate to homocysteine resulting in methionine formation. This is 5-methyltetrahydropteroyltriglutamate--homocysteine methyltransferase from Rhodopseudomonas palustris (strain ATCC BAA-98 / CGA009).